The chain runs to 302 residues: Stanniocalcin-2 (302 aa).

The signal sequence occupies residues 1–24; that stretch reads MCAERLGHFMTLALVLATIDPARG. A disordered region spans residues 23-44; that stretch reads RGTDATNPPEGPQDRSSQQKGR. N-linked (GlcNAc...) asparagine glycosylation occurs at asparagine 73. The disordered stretch occupies residues 218–302; that stretch reads PPTAPPERQP…EQSEYSDIRR (85 aa). A compositionally biased stretch (basic and acidic residues) spans 227–264; that stretch reads PQVDRAKLSRAHHGEAGHHLPEPSSRETGRGAKGERGS. Residues serine 250 and serine 251 each carry the phosphoserine modification. The residue at position 254 (threonine 254) is a Phosphothreonine.

Belongs to the stanniocalcin family. In terms of assembly, homodimer; disulfide-linked.

The protein localises to the secreted. Functionally, has an anti-hypocalcemic action on calcium and phosphate homeostasis. The protein is Stanniocalcin-2 (STC2) of Macaca nemestrina (Pig-tailed macaque).